The following is a 249-amino-acid chain: tRNA (guanine-N(1)-)-methyltransferase (249 aa).

S-adenosyl-L-methionine is bound by residues Gly-113 and 133–138 (VGDYVL).

This sequence belongs to the RNA methyltransferase TrmD family. In terms of assembly, homodimer.

Its subcellular location is the cytoplasm. The catalysed reaction is guanosine(37) in tRNA + S-adenosyl-L-methionine = N(1)-methylguanosine(37) in tRNA + S-adenosyl-L-homocysteine + H(+). In terms of biological role, specifically methylates guanosine-37 in various tRNAs. The protein is tRNA (guanine-N(1)-)-methyltransferase of Tolumonas auensis (strain DSM 9187 / NBRC 110442 / TA 4).